The primary structure comprises 2524 residues: Neurogenic locus notch homolog protein 1 (2524 aa).

The first 19 residues, 1-19 (MDRIGLAVLLCSLPVLTQG), serve as a signal peptide directing secretion. 4 consecutive EGF-like domains span residues 20-57 (LRCT…ERCQ), 58-99 (FPNP…KVCL), 102-140 (VDNA…DSCQ), and 141-177 (QADP…ATCK). At 20–1729 (LRCTQTAEMC…METPKPSTLY (1710 aa)) the chain is on the extracellular side. Intrachain disulfides connect cysteine 22-cysteine 35, cysteine 29-cysteine 45, cysteine 47-cysteine 56, cysteine 62-cysteine 74, cysteine 68-cysteine 87, cysteine 89-cysteine 98, cysteine 106-cysteine 117, cysteine 111-cysteine 128, cysteine 130-cysteine 139, cysteine 145-cysteine 156, cysteine 150-cysteine 165, cysteine 167-cysteine 176, cysteine 183-cysteine 194, cysteine 188-cysteine 203, cysteine 205-cysteine 214, cysteine 221-cysteine 232, cysteine 226-cysteine 242, cysteine 244-cysteine 253, cysteine 260-cysteine 271, cysteine 265-cysteine 280, cysteine 282-cysteine 291, cysteine 298-cysteine 311, cysteine 305-cysteine 320, cysteine 322-cysteine 331, cysteine 338-cysteine 349, cysteine 343-cysteine 358, cysteine 360-cysteine 369, cysteine 375-cysteine 386, cysteine 380-cysteine 397, cysteine 399-cysteine 408, cysteine 415-cysteine 428, cysteine 422-cysteine 437, and cysteine 439-cysteine 448. Residues 179–215 (DINECSQNPCKNGGQCINEFGSYRCTCQNRFTGRNCD) enclose the EGF-like 5; calcium-binding domain. Residues 217–254 (PYVPCNPSPCLNGGTCRQTDDTSYDCTCLPGFSGQNCE) form the EGF-like 6 domain. Threonine 231 carries O-linked (Fuc...) threonine; alternate glycosylation. Threonine 231 is a glycosylation site (O-linked (GalNAc...) threonine; alternate). The 37-residue stretch at 256 to 292 (NIDDCPSNNCRNGGTCVDGVNTYNCQCPPDWTGQYCT) folds into the EGF-like 7; calcium-binding domain. The EGF-like 8; calcium-binding domain occupies 294–332 (DVDECQLMPNACQNGGTCHNTYGGYNCVCVNGWTGEDCS). Residues 334–370 (NIDDCANAACHSGATCHDRVASFYCECPHGRTGLLCH) enclose the EGF-like 9; calcium-binding domain. Residues 371–409 (LDNACISNPCNEGSNCDTNPVNGKAICTCPPGYTGPACN) enclose the EGF-like 10 domain. Positions 411 to 449 (DVDECSLGANPCEHGGRCTNTLGSFQCNCPQGYAGPRCE) constitute an EGF-like 11; calcium-binding domain. Residues threonine 431 and serine 434 each contribute to the Ca(2+) site. A glycan (O-linked (Glc...) serine) is linked at serine 434. Aspartate 451, valine 452, and glutamate 454 together coordinate Ca(2+). In terms of domain architecture, EGF-like 12; calcium-binding spans 451-487 (DVNECLSNPCQNDSTCLDQIGEFQCICMPGYEGLYCE). 3 cysteine pairs are disulfide-bonded: cysteine 455-cysteine 466, cysteine 460-cysteine 475, and cysteine 477-cysteine 486. An O-linked (Glc...) serine glycan is attached at serine 457. The N-linked (GlcNAc...) asparagine glycan is linked to asparagine 462. O-linked (Fuc...) threonine glycosylation is present at threonine 465. Residues aspartate 468 and glutamine 469 each coordinate Ca(2+). 3 residues coordinate Ca(2+): asparagine 489, isoleucine 490, and glutamate 492. An EGF-like 13; calcium-binding domain is found at 489-525 (NIDECASNPCLHNGKCIDKINEFRCDCPTGFSGNLCQ). Intrachain disulfides connect cysteine 493-cysteine 504, cysteine 498-cysteine 513, cysteine 515-cysteine 524, cysteine 531-cysteine 542, cysteine 536-cysteine 551, cysteine 553-cysteine 562, cysteine 569-cysteine 579, cysteine 574-cysteine 588, cysteine 590-cysteine 599, cysteine 606-cysteine 617, cysteine 611-cysteine 626, cysteine 628-cysteine 637, cysteine 644-cysteine 654, cysteine 649-cysteine 663, cysteine 665-cysteine 674, cysteine 681-cysteine 692, cysteine 686-cysteine 701, cysteine 703-cysteine 712, cysteine 719-cysteine 729, cysteine 724-cysteine 738, cysteine 740-cysteine 749, cysteine 756-cysteine 767, cysteine 761-cysteine 776, cysteine 778-cysteine 787, cysteine 794-cysteine 805, cysteine 799-cysteine 814, cysteine 816-cysteine 825, cysteine 832-cysteine 843, cysteine 837-cysteine 854, cysteine 856-cysteine 865, cysteine 872-cysteine 883, cysteine 877-cysteine 892, cysteine 894-cysteine 903, cysteine 910-cysteine 921, cysteine 915-cysteine 930, cysteine 932-cysteine 941, cysteine 948-cysteine 959, cysteine 953-cysteine 968, cysteine 970-cysteine 979, cysteine 986-cysteine 997, cysteine 991-cysteine 1006, cysteine 1008-cysteine 1017, cysteine 1024-cysteine 1035, cysteine 1029-cysteine 1044, cysteine 1046-cysteine 1055, cysteine 1062-cysteine 1073, cysteine 1067-cysteine 1082, cysteine 1084-cysteine 1093, cysteine 1100-cysteine 1121, cysteine 1115-cysteine 1130, cysteine 1132-cysteine 1141, cysteine 1148-cysteine 1159, cysteine 1153-cysteine 1168, cysteine 1170-cysteine 1179, cysteine 1186-cysteine 1197, cysteine 1191-cysteine 1206, cysteine 1208-cysteine 1217, cysteine 1224-cysteine 1243, cysteine 1237-cysteine 1252, cysteine 1254-cysteine 1263, cysteine 1270-cysteine 1283, cysteine 1275-cysteine 1292, cysteine 1294-cysteine 1303, cysteine 1310-cysteine 1321, cysteine 1315-cysteine 1333, cysteine 1335-cysteine 1344, cysteine 1351-cysteine 1362, cysteine 1356-cysteine 1371, cysteine 1373-cysteine 1382, cysteine 1390-cysteine 1401, cysteine 1395-cysteine 1412, cysteine 1414-cysteine 1423, cysteine 1447-cysteine 1470, cysteine 1452-cysteine 1465, and cysteine 1461-cysteine 1477. Residue serine 495 is glycosylated (O-linked (Glc...) serine). 2 residues coordinate Ca(2+): aspartate 506 and lysine 507. The 37-residue stretch at 527–563 (DFDECTSTPCKNGAKCLDGPNSYTCQCTEGFTGRHCE) folds into the EGF-like 14; calcium-binding domain. Residues 565-600 (DINECIPDPCHYGTCKDGIATFTCLCRPGYTGRLCD) enclose the EGF-like 15; calcium-binding domain. One can recognise an EGF-like 16; calcium-binding domain in the interval 602 to 638 (DINECLSKPCLNGGQCTDRENGYICTCPKGTTGVNCE). Residues 640–675 (KIDDCASNLCDNGKCIDKIDGYECTCEPGYTGKLCN) enclose the EGF-like 17 domain. The region spanning 677–713 (NINECDSNPCRNGGTCKDQINGFTCVCPDGYHDHMCL) is the EGF-like 18; calcium-binding domain. In terms of domain architecture, EGF-like 19; calcium-binding spans 715–750 (EVNECNSNPCIHGACHDGVNGYKCDCEAGWSGSNCD). The EGF-like 20; calcium-binding domain maps to 752-788 (NNNECESNPCMNGGTCKDMTGAYICTCKAGFSGPNCQ). Positions 790 to 826 (NINECSSNPCLNHGTCIDDVAGYKCNCMLPYTGAICE) constitute an EGF-like 21; calcium-binding domain. In terms of domain architecture, EGF-like 22 spans 828–866 (VLAPCAGSPCKNGGRCKESEDFETFSCECPPGWQGQTCE). The EGF-like 23; calcium-binding domain occupies 868–904 (DMNECVNRPCRNGATCQNTNGSYKCNCKPGYTGRNCE). Asparagine 887 is a glycosylation site (N-linked (GlcNAc...) asparagine). An EGF-like 24; calcium-binding domain is found at 906–942 (DIDDCQPNPCHNGGSCSDGINMFFCNCPAGFRGPKCE). Residues 944 to 980 (DINECASNPCKNGANCTDCVNSYTCTCQPGFSGIHCE) form the EGF-like 25; calcium-binding domain. A glycan (N-linked (GlcNAc...) asparagine) is linked at asparagine 958. Residues 982–1018 (NTPDCTESSCFNGGTCIDGINTFTCQCPPGFTGSYCQ) form the EGF-like 26 domain. Positions 1020-1056 (DINECDSKPCLNGGTCQDSYGTYKCTCPQGYTGLNCQ) constitute an EGF-like 27; calcium-binding domain. 2 consecutive EGF-like domains span residues 1058-1094 (LVRW…VYCD) and 1096-1142 (PSVS…SYCE). Residues 1144–1180 (QVDECSPNPCQNGATCTDYLGGYSCECVAGYHGVNCS) enclose the EGF-like 30; calcium-binding domain. Asparagine 1178 is a glycosylation site (N-linked (GlcNAc...) asparagine). An EGF-like 31; calcium-binding domain is found at 1182–1218 (EINECLSHPCQNGGTCIDLINTYKCSCPRGTQGVHCE). In terms of domain architecture, EGF-like 32; calcium-binding spans 1220 to 1264 (NVDDCTPFYDSFTLEPKCFNNGKCIDRVGGYNCICPPGFVGERCE). EGF-like domains are found at residues 1266–1304 (DVNE…RRCE), 1306–1346 (VVDG…TCEY), 1347–1383 (DSRT…ATCQ), and 1386–1424 (VISP…LFCH). Threonine 1400 carries O-linked (Fuc...) threonine; alternate glycosylation. Threonine 1400 carries O-linked (GalNAc...) threonine; alternate glycosylation. 3 LNR repeats span residues 1447-1487 (CENE…PWKN), 1488-1529 (CTQS…CNPL), and 1530-1564 (YDQY…NMPE). An N-linked (GlcNAc...) asparagine glycan is attached at asparagine 1487. Intrachain disulfides connect cysteine 1488/cysteine 1512, cysteine 1494/cysteine 1507, cysteine 1503/cysteine 1519, cysteine 1534/cysteine 1547, and cysteine 1543/cysteine 1559. Asparagine 1508 carries N-linked (GlcNAc...) asparagine glycosylation. Asparagine 1584 is a glycosylation site (N-linked (GlcNAc...) asparagine). The helical transmembrane segment at 1730 to 1750 (PMLSMLVIPLLIIFVFMMVIV) threads the bilayer. Topologically, residues 1751–2524 (NKKRRREHGQ…QRTHIPEAFK (774 aa)) are cytoplasmic. ANK repeat units lie at residues 1876-1919 (DGFT…QLHN), 1924-1953 (TGET…DANV), 1957-1987 (MGRT…DLDA), 1991-2020 (DGTT…DVNA), 2024-2053 (FGKS…NKDM), and 2057-2086 (KEET…NRDI). Disordered stretches follow at residues 2144–2230 (NMKP…LNHL), 2369–2407 (MQAQ…FCSS), and 2451–2524 (LTPP…EAFK). Composition is skewed to polar residues over residues 2180–2192 (GKTT…SSGV) and 2208–2230 (DVSS…LNHL). The segment covering 2369–2394 (MQAQQMQQQQNLQLHQSMQQQHHNSS) has biased composition (low complexity). Composition is skewed to polar residues over residues 2395-2407 (TTST…FCSS) and 2451-2471 (LTPP…SHQL). Over residues 2481 to 2496 (PSPESPDQWSSSSPHS) the composition is skewed to low complexity. Polar residues predominate over residues 2497–2516 (NMSDWSEGISSPPTSMQPQR).

Belongs to the NOTCH family. As to quaternary structure, forms a ternary complex with nrarp and rbpj/suh. In terms of processing, O-glycosylated on the EGF-like domains. Contains both O-linked fucose and O-linked glucose. O-linked glycosylation by galnt11 is involved in determination of left/right symmetry: glycosylation promotes activation of notch1, possibly by promoting cleavage by adam17, modulating the balance between motile and immotile (sensory) cilia at the left-right organiser (LRO). Synthesized in the endoplasmic reticulum as an inactive form which is proteolytically cleaved by a furin-like convertase in the trans-Golgi network before it reaches the plasma membrane to yield an active, ligand-accessible form. Cleavage results in a C-terminal fragment N(TM) and a N-terminal fragment N(EC). Following ligand binding, it is cleaved by adam17 to yield a membrane-associated intermediate fragment called notch extracellular truncation (NEXT). Following endocytosis, this fragment is then cleaved by presenilin dependent gamma-secretase to release a Notch-derived peptide containing the intracellular domain (NICD) from the membrane.

The protein resides in the cell membrane. Its subcellular location is the nucleus. Functions as a receptor for membrane-bound ligands Jagged-1 (JAG1), Jagged-2 (JAG2) and Delta-1 (DLL1) to regulate cell-fate determination. Upon ligand activation through the released notch intracellular domain (NICD) it forms a transcriptional activator complex with RBPJ/RBPSUH and activates genes of the enhancer of split locus. Affects the implementation of differentiation, proliferation and apoptotic programs. Involved in angiogenesis; negatively regulates endothelial cell proliferation and migration and angiogenic sprouting. Involved in the maturation of both CD4(+) and CD8(+) cells in the thymus. Important for follicular differentiation and possibly cell fate selection within the follicle. During cerebellar development, functions as a receptor for neuronal DNER and is involved in the differentiation of Bergmann glia. Represses neuronal and myogenic differentiation. May play an essential role in postimplantation development, probably in some aspect of cell specification and/or differentiation. May be involved in mesoderm development, somite formation and neurogenesis. Involved in determination of left/right symmetry by modulating the balance between motile and immotile (sensory) cilia at the left-right organiser (LRO). The polypeptide is Neurogenic locus notch homolog protein 1 (notch1) (Xenopus laevis (African clawed frog)).